A 947-amino-acid chain; its full sequence is Translation initiation factor IF-2 (947 aa).

The disordered stretch occupies residues 55–361 (TKDAQAGSAK…PVTERKFHEL (307 aa)). Positions 63–73 (AKDKQVAEQKA) are enriched in basic and acidic residues. Positions 76 to 90 (AKATTPQPAAATQEA) are enriched in low complexity. Basic and acidic residues-rich tracts occupy residues 103 to 116 (FKAE…EQAA), 125 to 134 (SNDRKSDYRQ), and 170 to 183 (NDGH…DKNR). A compositionally biased stretch (low complexity) spans 190-204 (RQQDTGRQGQTQAGA). Composition is skewed to basic and acidic residues over residues 225–249 (ARQR…RQEA), 257–267 (QTEDKKHREAS), and 294–311 (NRPD…DGQK). A compositionally biased stretch (low complexity) spans 316 to 334 (SWNSQNQVRNQKNSNWNNN). Positions 335 to 345 (KKNKKGKHHKN) are enriched in basic residues. In terms of domain architecture, tr-type G spans 448–617 (ERAPVVTIMG…LLVAEVEELK (170 aa)). Residues 457-464 (GHVDHGKT) form a G1 region. A GTP-binding site is contributed by 457–464 (GHVDHGKT). A G2 region spans residues 482-486 (GITQH). A G3 region spans residues 503 to 506 (DTPG). Residues 503–507 (DTPGH) and 557–560 (NKID) each bind GTP. The interval 557–560 (NKID) is G4. Positions 593-595 (SAK) are G5.

It belongs to the TRAFAC class translation factor GTPase superfamily. Classic translation factor GTPase family. IF-2 subfamily.

The protein resides in the cytoplasm. Its function is as follows. One of the essential components for the initiation of protein synthesis. Protects formylmethionyl-tRNA from spontaneous hydrolysis and promotes its binding to the 30S ribosomal subunits. Also involved in the hydrolysis of GTP during the formation of the 70S ribosomal complex. This is Translation initiation factor IF-2 from Streptococcus equi subsp. zooepidemicus (strain MGCS10565).